The primary structure comprises 339 residues: 5-dehydro-2-deoxygluconokinase (339 aa).

Belongs to the carbohydrate kinase PfkB family.

It carries out the reaction 5-dehydro-2-deoxy-D-gluconate + ATP = 6-phospho-5-dehydro-2-deoxy-D-gluconate + ADP + H(+). It participates in polyol metabolism; myo-inositol degradation into acetyl-CoA; acetyl-CoA from myo-inositol: step 5/7. Its function is as follows. Catalyzes the phosphorylation of 5-dehydro-2-deoxy-D-gluconate (2-deoxy-5-keto-D-gluconate or DKG) to 6-phospho-5-dehydro-2-deoxy-D-gluconate (DKGP). The polypeptide is 5-dehydro-2-deoxygluconokinase (Clostridium botulinum (strain Alaska E43 / Type E3)).